A 387-amino-acid polypeptide reads, in one-letter code: Major outer membrane porin (387 aa).

The N-terminal stretch at 1-22 (MKKLLKSVLAFAVLGSASSLHA) is a signal peptide.

This sequence belongs to the chlamydial porin (CP) (TC 1.B.2) family. Part of a disulfide cross-linked outer membrane complex (COMC) composed of the major outer membrane porin (MOMP), the small cysteine-rich protein (OmcA) and the large cysteine-rich periplasmic protein (OmcB).

The protein resides in the cell outer membrane. Functionally, in elementary bodies (EBs, the infectious stage, which is able to survive outside the host cell) provides the structural integrity of the outer envelope through disulfide cross-links with the small cysteine-rich protein and the large cysteine-rich periplasmic protein. It has been described in publications as the Sarkosyl-insoluble COMC (Chlamydia outer membrane complex), and serves as the functional equivalent of peptidoglycan. Its function is as follows. Permits diffusion of specific solutes through the outer membrane. This Chlamydia muridarum (strain MoPn / Nigg) protein is Major outer membrane porin (ompA).